Here is a 162-residue protein sequence, read N- to C-terminus: Protein snakeskin (162 aa).

The Cytoplasmic portion of the chain corresponds to 2-6 (VSVET). A helical membrane pass occupies residues 7 to 27 (VGSIFIKALKLIINLVIIFLY). Over 28 to 53 (RWGDGGEFLGIGGTWNLNEEKSADAE) the chain is Extracellular. The chain crosses the membrane as a helical span at residues 54–74 (IVASGVMVGFLIYTGCHTIAF). Residues 75-88 (AFGTTKHKGELCDT) lie on the Cytoplasmic side of the membrane. The helical transmembrane segment at 89-109 (IMNVVGCIMWIAVGGVALHYW) threads the bilayer. The Extracellular segment spans residues 110–128 (KGYMSDEGFLYVNSERQVG). A helical membrane pass occupies residues 129-149 (IAMGSLCVIEGALYLLDTVLA). Residues 150-162 (CIHYSKGDTDYTQ) lie on the Cytoplasmic side of the membrane.

In terms of assembly, forms a complex with Tsp2A and mesh. Interacts with mesh; the interaction may be necessary for the localization of both proteins to the cell apicolateral region.

The protein resides in the apicolateral cell membrane. The protein localises to the cell junction. Its subcellular location is the septate junction. Required for assembly of smooth septate junctions (sSJs), together with mesh and Tsp2A. May be important for barrier function of the midgut epithelium. The chain is Protein snakeskin from Drosophila melanogaster (Fruit fly).